We begin with the raw amino-acid sequence, 482 residues long: Dual specificity protein phosphatase 10 (482 aa).

In terms of domain architecture, Rhodanese spans 168–285; sequence PSQGPVIIDC…FKQNHENLCD (118 aa). An interaction with MAP kinases region spans residues 199–215; sequence KISRRRLQQGKITVLDL. The region spanning 321-464 is the Tyrosine-protein phosphatase domain; it reads ELTPILPFLF…LLEFEEDLNN (144 aa). Cysteine 408 serves as the catalytic Phosphocysteine intermediate.

Belongs to the protein-tyrosine phosphatase family. Non-receptor class dual specificity subfamily. As to quaternary structure, monomer. Interacts with MAPK14. In terms of tissue distribution, expressed in keratinocytes (at protein level). Detected in brain.

The protein localises to the cytoplasm. It is found in the nucleus. It catalyses the reaction O-phospho-L-tyrosyl-[protein] + H2O = L-tyrosyl-[protein] + phosphate. The enzyme catalyses O-phospho-L-seryl-[protein] + H2O = L-seryl-[protein] + phosphate. It carries out the reaction O-phospho-L-threonyl-[protein] + H2O = L-threonyl-[protein] + phosphate. In terms of biological role, protein phosphatase involved in the inactivation of MAP kinases. Has a specificity for the MAPK11/MAPK12/MAPK13/MAPK14 subfamily. It preferably dephosphorylates p38. In Homo sapiens (Human), this protein is Dual specificity protein phosphatase 10 (DUSP10).